Reading from the N-terminus, the 394-residue chain is GTPase Era, mitochondrial (394 aa).

The Era-type G domain occupies 32–280 (KCLQLAVIGA…RDHLMSISPQ (249 aa)). Positions 40–47 (GAPNVGKS) are G1. 40–47 (GAPNVGKS) contributes to the GTP binding site. Positions 66–70 (DTTTR) are G2. The interval 87-90 (DSPG) is G3. GTP is bound by residues 87–91 (DSPGA) and 160–163 (NKID). A G4 region spans residues 160-163 (NKID). Positions 259–261 (VSS) are G5.

It belongs to the TRAFAC class TrmE-Era-EngA-EngB-Septin-like GTPase superfamily. Era GTPase family.

It localises to the mitochondrion matrix. Its subcellular location is the mitochondrion inner membrane. Probable GTPase that plays a role in the mitochondrial ribosomal small subunit assembly. Specifically binds the 12S mitochondrial rRNA (12S mt-rRNA) to a 33 nucleotide section delineating the 3' terminal stem-loop region. May act as a chaperone that protects the 12S mt-rRNA on the 28S mitoribosomal subunit during ribosomal small subunit assembly. May play a role in positively regulating mitochondrial function. Plays a role in fertility. The polypeptide is GTPase Era, mitochondrial (Caenorhabditis elegans).